The chain runs to 388 residues: Succinate--CoA ligase [ADP-forming] subunit beta (388 aa).

The ATP-grasp domain maps to 9–244 (KQLFARYGMP…LSQEDERESR (236 aa)). Residues lysine 46, 53–55 (GRG), glutamate 99, threonine 102, and glutamate 107 contribute to the ATP site. The Mg(2+) site is built by asparagine 199 and aspartate 213. Residues asparagine 264 and 321 to 323 (GIV) each bind substrate.

The protein belongs to the succinate/malate CoA ligase beta subunit family. Heterotetramer of two alpha and two beta subunits. The cofactor is Mg(2+).

The catalysed reaction is succinate + ATP + CoA = succinyl-CoA + ADP + phosphate. It carries out the reaction GTP + succinate + CoA = succinyl-CoA + GDP + phosphate. The protein operates within carbohydrate metabolism; tricarboxylic acid cycle; succinate from succinyl-CoA (ligase route): step 1/1. Succinyl-CoA synthetase functions in the citric acid cycle (TCA), coupling the hydrolysis of succinyl-CoA to the synthesis of either ATP or GTP and thus represents the only step of substrate-level phosphorylation in the TCA. The beta subunit provides nucleotide specificity of the enzyme and binds the substrate succinate, while the binding sites for coenzyme A and phosphate are found in the alpha subunit. The protein is Succinate--CoA ligase [ADP-forming] subunit beta of Serratia proteamaculans (strain 568).